An 85-amino-acid chain; its full sequence is UPF0386 protein Atu1321 (85 aa).

The protein belongs to the UPF0386 family.

The polypeptide is UPF0386 protein Atu1321 (Agrobacterium fabrum (strain C58 / ATCC 33970) (Agrobacterium tumefaciens (strain C58))).